We begin with the raw amino-acid sequence, 122 residues long: MIQTQSMLDVADNSGARRVMCIKVLGGSHRRYAGIGDIIKVTVKEAIPRGKVKKGQVMTAVVVRTRHGVRRADGSIIRFDGNAAVLLNTKQEPIGTRIFGPVTRELRTEKFMKIVSLAPEVL.

This sequence belongs to the universal ribosomal protein uL14 family. In terms of assembly, part of the 50S ribosomal subunit. Forms a cluster with proteins L3 and L19. In the 70S ribosome, L14 and L19 interact and together make contacts with the 16S rRNA in bridges B5 and B8.

Binds to 23S rRNA. Forms part of two intersubunit bridges in the 70S ribosome. In Pseudomonas entomophila (strain L48), this protein is Large ribosomal subunit protein uL14.